The following is a 571-amino-acid chain: Origin recognition complex subunit 5 (571 aa).

Disordered regions lie at residues 90–142 (DDEY…YDDD) and 404–430 (QIYP…GRQL). Low complexity-rich tracts occupy residues 107–133 (NNNN…NNND) and 407–416 (PPQQVPQQQK). A compositionally biased stretch (basic and acidic residues) spans 417–428 (QQEKEKEKEKGR).

Belongs to the ORC1 family. In terms of assembly, ORC is composed of six subunits.

Its subcellular location is the nucleus. In terms of biological role, component of the origin recognition complex (ORC) that binds origins of replication. DNA-binding is ATP-dependent, however specific DNA sequences that define origins of replication have not been identified so far. ORC is required to assemble the pre-replication complex necessary to initiate DNA replication. The polypeptide is Origin recognition complex subunit 5 (orcE) (Dictyostelium discoideum (Social amoeba)).